The following is a 940-amino-acid chain: Translation initiation factor IF-2 (940 aa).

Disordered stretches follow at residues 116 to 137, 151 to 196, 210 to 294, and 318 to 346; these read PEQE…SSDT, EVEA…EQRS, AVRK…VKKV, and HSAP…VANR. A compositionally biased stretch (polar residues) spans 121-137; the sequence is LESTSVAEIPESVSSDT. Residues 159–180 are compositionally biased toward acidic residues; it reads PEPEVEATPEPEVEDVVAEEAE. Residues 181 to 193 show a composition bias toward low complexity; it reads PAAAEPAPAPVVE. A compositionally biased stretch (basic and acidic residues) spans 213-239; that stretch reads KKAEEEAEVARRKADAEKAEAAAKQKA. Residues 282–294 are compositionally biased toward basic residues; it reads KHNKKAGKAVKKV. Low complexity predominate over residues 326 to 337; sequence GGQNNNSSNSGS. The tr-type G domain maps to 441 to 610; the sequence is ARAPVVTVMG…ALQAELLELS (170 aa). A G1 region spans residues 450–457; that stretch reads GHVDHGKT. A GTP-binding site is contributed by 450–457; sequence GHVDHGKT. Residues 475–479 form a G2 region; the sequence is GITQH. The G3 stretch occupies residues 496-499; sequence DTPG. GTP is bound by residues 496 to 500 and 550 to 553; these read DTPGH and NKID. The tract at residues 550–553 is G4; the sequence is NKID. The tract at residues 586 to 588 is G5; that stretch reads SAQ.

Belongs to the TRAFAC class translation factor GTPase superfamily. Classic translation factor GTPase family. IF-2 subfamily.

It is found in the cytoplasm. In terms of biological role, one of the essential components for the initiation of protein synthesis. Protects formylmethionyl-tRNA from spontaneous hydrolysis and promotes its binding to the 30S ribosomal subunits. Also involved in the hydrolysis of GTP during the formation of the 70S ribosomal complex. The polypeptide is Translation initiation factor IF-2 (Teredinibacter turnerae (strain ATCC 39867 / T7901)).